Reading from the N-terminus, the 978-residue chain is Monofunctional C1-tetrahydrofolate synthase, mitochondrial (978 aa).

Residues 1-10 (MGTRLPLVLR) show a composition bias toward low complexity. A mitochondrion-targeting transit peptide spans 1-31 (MGTRLPLVLRQLRRPPQPPGPPRRLRVPCRA). Residues 1–71 (MGTRLPLVLR…SPGGRTPAAR (71 aa)) are disordered. Positions 31–348 (ASSGGGGGGG…REQQHRRWRL (318 aa)) are methylenetetrahydrofolate dehydrogenase and cyclohydrolase. A compositionally biased stretch (gly residues) spans 33 to 45 (SGGGGGGGGGREG). An N6-acetyllysine; alternate modification is found at K189. At K189 the chain carries N6-succinyllysine; alternate. Residues 349–978 (HCLKLQPLSP…TETEQVKGLF (630 aa)) are formyltetrahydrofolate synthetase. S357 carries the phosphoserine modification. 423-430 (TPLGEGKS) is an ATP binding site. K596 is subject to N6-succinyllysine.

In the N-terminal section; belongs to the tetrahydrofolate dehydrogenase/cyclohydrolase family. This sequence in the C-terminal section; belongs to the formate--tetrahydrofolate ligase family. In terms of assembly, homodimer. In terms of tissue distribution, detected in most tissues, highest expression found in placenta, thymus and brain. Low expression is found in liver and skeletal muscle. Up-regulated in colon adenocarcinoma.

The protein localises to the mitochondrion. It carries out the reaction (6S)-5,6,7,8-tetrahydrofolate + formate + ATP = (6R)-10-formyltetrahydrofolate + ADP + phosphate. Its pathway is one-carbon metabolism; tetrahydrofolate interconversion. Functionally, may provide the missing metabolic reaction required to link the mitochondria and the cytoplasm in the mammalian model of one-carbon folate metabolism complementing thus the enzymatic activities of MTHFD2. This is Monofunctional C1-tetrahydrofolate synthase, mitochondrial from Homo sapiens (Human).